Reading from the N-terminus, the 671-residue chain is MRLGVALSTIAVLLTATSARNLDKRQWGWPNFGGGNGGNGGNGGKTINDYKREQGAGRDIHVYAPSNLAPNSPLLLSLHGMDQDPNYQQSNTHWETLADSEGFVVVYPRGGTGMSTWDIQGTKDTQWVSQIIDQMKKEYNIDTKRVYLSGFSMGGMFTYHAMSQIANKIAAFAPCSGPNVFGASKAQRPVPIFHVHGTNDDVLNYQQVEGFLKNYRDQFHCPSQADTKTNYPNRENPNATLYTWGPCDKGVYIKHLKLQGRGHSPSSADIQDIWDFVSQWTVDGPVSASGNGGGNTTPTNPSTGGNGNGNGGGNTTPTNPSTGGNGNGNGGSTDKCSSNITKQGYKCCASNCEVVYTDSDGDWGVENDQWCGCGNRVTVGSGTCSAKILQQGYKCCPSGCIIYYTDEDGTWGVNGEEWCGCGSGSSSTGGGNDAPSSGSGYQGANGTNFCNNAKHSGESVTVTSNKVGDINGIGYELWADSGNNSATFYDDGSFSCSFQRAKDYLCRSGLSFDSTKTHKQIGHIYAEFKLVKQNIQNVDYSYVGIYGWTRNPLVEFYVVDNWLSQWRPGDWVGNKKHGDFTIGGAQYTVYENTRYGPSIDGDTNFKQYFSIRQQPRDCGTIDITAHFEQWEKLGMTMGKMHEAKVLGEAGSNNGGTSGTADFPFAKVYVKN.

The N-terminal stretch at 1 to 19 (MRLGVALSTIAVLLTATSA) is a signal peptide. The segment at 54–279 (QGAGRDIHVY…IQDIWDFVSQ (226 aa)) is acetylxylan esterase. The active-site Charge relay system is serine 152. An N-linked (GlcNAc...) asparagine glycan is attached at asparagine 238. The interval 285–328 (PVSASGNGGGNTTPTNPSTGGNGNGNGGGNTTPTNPSTGGNGNG) is disordered. Over residues 304–314 (GGNGNGNGGGN) the composition is skewed to gly residues. CBM10 domains lie at 335-374 (KCSSNITKQGYKCCASNCEVVYTDSDGDWGVENDQWCGCG) and 383-422 (TCSAKILQQGYKCCPSGCIIYYTDEDGTWGVNGEEWCGCG). N-linked (GlcNAc...) asparagine glycosylation occurs at asparagine 339. Residues asparagine 445 and asparagine 483 are each glycosylated (N-linked (GlcNAc...) asparagine). The GH11 domain occupies 461–661 (TVTSNKVGDI…NNGGTSGTAD (201 aa)). Glutamate 555 (nucleophile) is an active-site residue. The Proton donor role is filled by glutamate 648.

In the N-terminal section; belongs to the axeA family. This sequence in the C-terminal section; belongs to the glycosyl hydrolase 11 (cellulase G) family.

It is found in the secreted. The catalysed reaction is Deacetylation of xylans and xylo-oligosaccharides.. It carries out the reaction Endohydrolysis of (1-&gt;4)-beta-D-xylosidic linkages in xylans.. Its pathway is glycan degradation; xylan degradation. Functionally, bifunctional acetylxylan esterase/xylanase involved in the hydrolysis of xylan, a major structural heterogeneous polysaccharide found in plant biomass representing the second most abundant polysaccharide in the biosphere, after cellulose. Degrades xylan from acetylxylan, beechwood, birchwood, and oat spelt, and releases acetate from 4-methylumbelliferyl acetate and beta-D-xylose tetraacetate. No activity is observed against carboxy methyl cellulose, beta-glucan, p-nitrophenol acetate, p-nitrophenol laurate, p-nitrophenol myristate, p-nitrophenol, palmitate, or beta-naphthol acetate. This is Bifunctional acetylxylan esterase/xylanase XynS20E (xynS20E) from Neocallimastix patriciarum (Rumen fungus).